The chain runs to 336 residues: Transcription initiation factor IIB (336 aa).

Residues 41–72 form a TFIIB-type zinc finger; sequence QKLRCPICGNTVFIEDAERGQIVCASCGYVLM. Positions 45, 48, 64, and 67 each coordinate Zn(2+). A run of 2 repeats spans residues 152-235 and 246-327.

The protein belongs to the TFIIB family.

Functionally, stabilizes TBP binding to an archaeal box-A promoter. Also responsible for recruiting RNA polymerase II to the pre-initiation complex (DNA-TBP-TFIIB). The sequence is that of Transcription initiation factor IIB from Caldivirga maquilingensis (strain ATCC 700844 / DSM 13496 / JCM 10307 / IC-167).